The sequence spans 362 residues: Myricetin 3'/5'-O-methyltransferase 1 (362 aa).

An S-adenosyl-L-methionine-binding site is contributed by Asp-229. His-267 acts as the Proton acceptor in catalysis.

Belongs to the class I-like SAM-binding methyltransferase superfamily. Cation-independent O-methyltransferase family. Homodimer. Mainly expressed in leaves secreting glandular trichomes types 1 and 4 and, to a lesser extent, in storage trichomes type 6.

It catalyses the reaction myricetin + S-adenosyl-L-methionine = laricitrin + S-adenosyl-L-homocysteine + H(+). The catalysed reaction is laricitrin + S-adenosyl-L-methionine = syringetin + S-adenosyl-L-homocysteine + H(+). It carries out the reaction a 3'-hydroxyflavone + S-adenosyl-L-methionine = a 3'-methoxyflavone + S-adenosyl-L-homocysteine + H(+). The enzyme catalyses a 5'-hydroxy-3'-methoxyflavone + S-adenosyl-L-methionine = a 3',5'-dimethoxyflavone + S-adenosyl-L-homocysteine + H(+). It catalyses the reaction quercetin + S-adenosyl-L-methionine = isorhamnetin + S-adenosyl-L-homocysteine + H(+). The catalysed reaction is rhamnetin + S-adenosyl-L-methionine = rhamnacene + S-adenosyl-L-homocysteine + H(+). It carries out the reaction 3',4',5,7-tetrahydroxy-3-methoxyflavone + S-adenosyl-L-methionine = 3,3'-O-dimethylquercetin + S-adenosyl-L-homocysteine + H(+). It participates in flavonoid metabolism. In terms of biological role, flavonoid 3'/5'-O-methyltransferase involved in the biosynthesis of polymethoxylated flavonoids natural products such as myricetin derivatives, aroma compounds possessing antioxidant properties and exhibiting pharmacological activities such as anti-carcinogen, anti-viral, anti-thrombotic, anti-diabetic, anti-atherosclerotic, and anti-inflammatory effects. Catalyzes S-adenosylmethionine-dependent regioselective 3'/5'-O-methylation of flavonoids; active on various hydroxylated flavonoid substrates, including myricetin and quercetin, but inactive toward kaempferol. Mediates the formation of 3'-methyl derivatives from quercetin, myricetin, 3-methyl quercetin and 7-methyl quercetin (rhamnetin), producing 3'-methyl quercetin (isorhamnetin), 3'-methyl myricetin (laricitrin), 3,3'-dimethyl quercetin (3-O-methylisorhamnetin) and 7,3'-dimethyl quercetin (7-O-methylisorhamnetin), respectively. Triggers the 5'-O-methylation of 3'-methyl myricetin (laricitrin), thus leading to production of 3',5'-dimethyl myricetin (syringetin). This chain is Myricetin 3'/5'-O-methyltransferase 1, found in Solanum habrochaites (Wild tomato).